The following is a 223-amino-acid chain: Ubiquitin-conjugating enzyme E2 S (223 aa).

Residue Met1 is modified to N-acetylmethionine. The UBC core domain occupies 11 to 157 (HIIRLVYKEV…ARLLTEIHGG (147 aa)). Cys95 (glycyl thioester intermediate) is an active-site residue. Residues 155-223 (HGGAGGPSGG…TDKKRALRRL (69 aa)) are disordered. Residues 169 to 195 (GRATASGAAASTADPTAPGGPAGAEGP) are compositionally biased toward low complexity. The residue at position 174 (Ser174) is a Phosphoserine. The span at 209 to 223 (AAKKKTDKKRALRRL) shows a compositional bias: basic residues.

Belongs to the ubiquitin-conjugating enzyme family. In terms of assembly, component of the APC/C complex, composed of at least 14 distinct subunits that assemble into a complex of at least 19 chains with a combined molecular mass of around 1.2 MDa. Within this complex, directly interacts with ANAPC2 and ANAPC4. Interacts with CDC20, FZR1/CDH1 and VHL. Post-translationally, autoubiquitinated by the APC/C complex during G1, leading to its degradation by the proteasome.

The enzyme catalyses S-ubiquitinyl-[E1 ubiquitin-activating enzyme]-L-cysteine + [E2 ubiquitin-conjugating enzyme]-L-cysteine = [E1 ubiquitin-activating enzyme]-L-cysteine + S-ubiquitinyl-[E2 ubiquitin-conjugating enzyme]-L-cysteine.. Its pathway is protein modification; protein ubiquitination. Accepts ubiquitin from the E1 complex and catalyzes its covalent attachment to other proteins. Catalyzes 'Lys-11'-linked polyubiquitination. Acts as an essential factor of the anaphase promoting complex/cyclosome (APC/C), a cell cycle-regulated ubiquitin ligase that controls progression through mitosis. Acts by specifically elongating 'Lys-11'-linked polyubiquitin chains initiated by the E2 enzyme UBE2C/UBCH10 on APC/C substrates, enhancing the degradation of APC/C substrates by the proteasome and promoting mitotic exit. Also acts by elongating ubiquitin chains initiated by the E2 enzyme UBE2D1/UBCH5 in vitro; it is however unclear whether UBE2D1/UBCH5 acts as an E2 enzyme for the APC/C in vivo. Also involved in ubiquitination and subsequent degradation of VHL, resulting in an accumulation of HIF1A. In vitro able to promote polyubiquitination using all 7 ubiquitin Lys residues, except 'Lys-48'-linked polyubiquitination. This chain is Ubiquitin-conjugating enzyme E2 S (UBE2S), found in Bos taurus (Bovine).